The primary structure comprises 916 residues: uncharacterized protein (916 aa).

This is an uncharacterized protein from Micromonas pusilla reovirus (isolate Netherlands/2005) (MpRV).